The primary structure comprises 316 residues: N-acetylmuramic acid 6-phosphate etherase (316 aa).

The 164-residue stretch at I68–K231 folds into the SIS domain. Catalysis depends on E96, which acts as the Proton donor. The active site involves E127.

The protein belongs to the GCKR-like family. MurNAc-6-P etherase subfamily. Homodimer.

The catalysed reaction is N-acetyl-D-muramate 6-phosphate + H2O = N-acetyl-D-glucosamine 6-phosphate + (R)-lactate. Its pathway is amino-sugar metabolism; N-acetylmuramate degradation. Its function is as follows. Specifically catalyzes the cleavage of the D-lactyl ether substituent of MurNAc 6-phosphate, producing GlcNAc 6-phosphate and D-lactate. In Prochlorococcus marinus (strain MIT 9313), this protein is N-acetylmuramic acid 6-phosphate etherase.